We begin with the raw amino-acid sequence, 370 residues long: Flagellar P-ring protein (370 aa).

Positions 1–24 (MTLSKWILSFGLSVCLIVSHPVSA) are cleaved as a signal peptide.

This sequence belongs to the FlgI family. As to quaternary structure, the basal body constitutes a major portion of the flagellar organelle and consists of four rings (L,P,S, and M) mounted on a central rod.

It is found in the periplasm. The protein resides in the bacterial flagellum basal body. Its function is as follows. Assembles around the rod to form the L-ring and probably protects the motor/basal body from shearing forces during rotation. In Nitrosomonas europaea (strain ATCC 19718 / CIP 103999 / KCTC 2705 / NBRC 14298), this protein is Flagellar P-ring protein.